The primary structure comprises 1017 residues: Probable disease resistance protein RDL5 (1017 aa).

A coiled-coil region spans residues 25-52 (QGVEDQVTELKRDLNMLSSFLKDANAKK). The 314-residue stretch at 147–460 (KQREMRQKFS…AEGIFQPRHY (314 aa)) folds into the NB-ARC domain. Residue 190 to 197 (GMGGLGKT) coordinates ATP. 7 LRR repeats span residues 602–627 (LIHL…NLKL), 649–674 (MQEL…NLVK), 675–699 (LETL…RLST), 768–791 (PSHL…ILEK), 792–819 (LLQL…GFPQ), 841–865 (MPLL…HLPS), and 937–962 (MPFL…QFIY).

This sequence belongs to the disease resistance NB-LRR family.

Its function is as follows. Potential disease resistance protein. This chain is Probable disease resistance protein RDL5 (RDL5), found in Arabidopsis thaliana (Mouse-ear cress).